An 83-amino-acid chain; its full sequence is Protein ShK-like4 (83 aa).

A signal peptide spans 1-21; the sequence is MDTRVIAVLFVAIMVLSSTNA. Positions 22–48 are excised as a propeptide; sequence LPKQKGSYKNMNHADFLKGLDRASSKR. Cystine bridges form between cysteine 50/cysteine 82, cysteine 57/cysteine 75, and cysteine 67/cysteine 79. The region spanning 50-83 is the ShKT domain; that stretch reads CRDSHWSCFFQSNYEDICSTAQAEECALSCGLCE.

In terms of processing, contains 3 disulfide bonds. In terms of tissue distribution, expressed in various neurons (ectodermal sensory cells) (in planulae and primary polyps). Not expressed in nematocytes.

Probable neuropeptide. The sequence is that of Protein ShK-like4 from Nematostella vectensis (Starlet sea anemone).